A 368-amino-acid chain; its full sequence is Protein L-Myc (368 aa).

Disordered stretches follow at residues 39–79 (PPTS…RGHS), 112–179 (RLAP…EKRR), and 218–295 (FPPE…FLER). Positions 135–147 (LEASNPAPATQCQ) are enriched in polar residues. Residues 247 to 258 (EEEEEEEEEEEI) show a composition bias toward acidic residues. Over residues 283 to 294 (DVTKRKNHNFLE) the composition is skewed to basic and acidic residues. One can recognise a bHLH domain in the interval 285 to 337 (TKRKNHNFLERKRRNDLRSRFLALRDQVPTLASCSKAPKVVILSKALEYLQAL). Residues 337–365 (LVGAEKKMATEKRQLRCRQQQLQKRIAYL) form a leucine-zipper region.

As to quaternary structure, efficient DNA binding requires dimerization with another bHLH protein. Binds DNA as a heterodimer with MAX.

It is found in the nucleus. The polypeptide is Protein L-Myc (Mycl) (Mus musculus (Mouse)).